The primary structure comprises 556 residues: Arginine--tRNA ligase (556 aa).

Positions 134–144 (ANPTGPLHIGH) match the 'HIGH' region motif.

It belongs to the class-I aminoacyl-tRNA synthetase family. As to quaternary structure, monomer.

Its subcellular location is the cytoplasm. The enzyme catalyses tRNA(Arg) + L-arginine + ATP = L-arginyl-tRNA(Arg) + AMP + diphosphate. This chain is Arginine--tRNA ligase, found in Micrococcus luteus (strain ATCC 4698 / DSM 20030 / JCM 1464 / CCM 169 / CCUG 5858 / IAM 1056 / NBRC 3333 / NCIMB 9278 / NCTC 2665 / VKM Ac-2230) (Micrococcus lysodeikticus).